Consider the following 348-residue polypeptide: MEMSFRWYGEDDPVTLENIRQIPTMKGIVTAIYDVPVGEVWPRERIQQLKETVEASGLKISVIESVPVHEDIKLGRPTRDVLIDNYIQTIKNLAAEGIDTICYNFMPVFDWTRTDLAYEYPDGSTALIFDEEVSKKMDPVNGELSLPGWDSSYTKEEMRAIMDAYADVDEEKLWEHLEYFIKRIIPEAEAVGVKMAIHPDDPPYSIFGLPRIITGLDSVERFVNLYDSKSNGITLCVGSYASDPKNDVLEISRRAFELNRVNFVHARNIKLGEGKSFKESAHPSEYGSIDMYEVIKLCHEFGFEGAIRPDHGRMIWGETGRPGYGLYDRALGATYLSGLYEAVVKAAK.

This sequence belongs to the mannonate dehydratase family. The cofactor is Fe(2+). Requires Mn(2+) as cofactor.

The catalysed reaction is D-mannonate = 2-dehydro-3-deoxy-D-gluconate + H2O. It functions in the pathway carbohydrate metabolism; pentose and glucuronate interconversion. Functionally, catalyzes the dehydration of D-mannonate. This chain is Mannonate dehydratase, found in Streptococcus uberis (strain ATCC BAA-854 / 0140J).